A 938-amino-acid polypeptide reads, in one-letter code: Isoleucine--tRNA ligase (938 aa).

Positions 58–68 (PYANGNIHIGH) match the 'HIGH' region motif. Glu-563 is an L-isoleucyl-5'-AMP binding site. The short motif at 604 to 608 (KMSKS) is the 'KMSKS' region element. Lys-607 contributes to the ATP binding site. Residues Cys-903, Cys-906, Cys-921, and Cys-924 each contribute to the Zn(2+) site.

The protein belongs to the class-I aminoacyl-tRNA synthetase family. IleS type 1 subfamily. As to quaternary structure, monomer. Zn(2+) serves as cofactor.

Its subcellular location is the cytoplasm. The catalysed reaction is tRNA(Ile) + L-isoleucine + ATP = L-isoleucyl-tRNA(Ile) + AMP + diphosphate. In terms of biological role, catalyzes the attachment of isoleucine to tRNA(Ile). As IleRS can inadvertently accommodate and process structurally similar amino acids such as valine, to avoid such errors it has two additional distinct tRNA(Ile)-dependent editing activities. One activity is designated as 'pretransfer' editing and involves the hydrolysis of activated Val-AMP. The other activity is designated 'posttransfer' editing and involves deacylation of mischarged Val-tRNA(Ile). The protein is Isoleucine--tRNA ligase of Buchnera aphidicola subsp. Schizaphis graminum (strain Sg).